A 389-amino-acid polypeptide reads, in one-letter code: Mesotocin receptor (389 aa).

Topologically, residues 1–50 are extracellular; that stretch reads MEGLCLNLDCSELPNSSWVNSSMENQNHSSNSTRDPLKRNEEVAKVEVTV. N-linked (GlcNAc...) asparagine glycans are attached at residues asparagine 15, asparagine 20, asparagine 27, and asparagine 31. A helical transmembrane segment spans residues 51 to 71; the sequence is LALILFLALAGNICVLLGIYI. Residues 72–87 lie on the Cytoplasmic side of the membrane; that stretch reads NRHKHSRMYFFMKHLS. Residues 88–108 form a helical membrane-spanning segment; the sequence is IADLVVAIFQVLPQLIWDITF. Topologically, residues 109 to 119 are extracellular; sequence RFYAPDLVCRL. Cysteines 117 and 192 form a disulfide. The chain crosses the membrane as a helical span at residues 120-140; sequence VTYLQVVGMFASTYMLLLMSL. Topologically, residues 141–159 are cytoplasmic; that stretch reads DRCLAICQPLRSLHRRSDC. The helical transmembrane segment at 160 to 180 threads the bilayer; sequence VYVLFTWILSFLLSTPQTVIF. Topologically, residues 181 to 207 are extracellular; it reads SLTEVGNGVYDCRADFIQPWGPKAYIT. Residues 208–228 traverse the membrane as a helical segment; the sequence is WITLAVYIIPVMILSVCYGLI. The Cytoplasmic segment spans residues 229-275; sequence SYKIWQNIRLKTVCESNLRLSTSRRATLSRVSSVRLISKAKIRTVKM. The helical transmembrane segment at 276–296 threads the bilayer; the sequence is TFIIVLAYIVCWTPFFFVQMW. At 297–308 the chain is on the extracellular side; it reads SVWDPNPPKEAS. A helical transmembrane segment spans residues 309–329; that stretch reads LFIIAMLLGSLNSCCNPWIYM. The Cytoplasmic portion of the chain corresponds to 330–389; the sequence is LFTGHLFHDLLQSFLCCSARYLKTQQQGSDLSASRKSNSSTFVLSRKSSSQKSITQPSTA. The segment at 360–389 is disordered; sequence LSASRKSNSSTFVLSRKSSSQKSITQPSTA.

This sequence belongs to the G-protein coupled receptor 1 family. Vasopressin/oxytocin receptor subfamily. As to expression, highly expressed in the bladder. Also expressed in kidney, brain and skeletal muscle.

It localises to the cell membrane. Binds to mesotocin and may play a role in the regulation of water and salt transport. The sequence is that of Mesotocin receptor from Rhinella marina (Cane toad).